The sequence spans 388 residues: Norsolorinic acid reductase A (388 aa).

Asp-69 is an NADP(+) binding site. The active-site Proton donor is Tyr-74. Residue His-148 participates in substrate binding. NADP(+)-binding positions include 178–179, Gln-204, 233–243, and 300–308; these read SD, GVLGRGQFRSA, and RKVEHLKEN.

It belongs to the aldo/keto reductase family. Aldo/keto reductase 2 subfamily.

The protein operates within mycotoxin biosynthesis; aflatoxin biosynthesis. Functionally, norsolorinic acid reductase; part of the gene cluster that mediates the biosynthesis of aflatoxins, a group of polyketide-derived furanocoumarins, and part of the most toxic and carcinogenic compounds among the known mycotoxins. The four major aflatoxins produced by A.parasiticus are aflatoxin B1 (AFB1), aflatoxin B2 (AFB2), aflatoxin G1 (AFG1) and aflatoxin G2 (AFG2). Within the aflatoxin pathway, the norsolorinic acid reductase aflE may play a role in the conversion of norsolorinic acid (NOR) to averantin (AVN). The biosynthesis of aflatoxins begins with the norsolorinic acid synthase aflC that combines a hexanoyl starter unit produced by the fatty acid synthase aflA/aflB and 7 malonyl-CoA extender units to synthesize the precursor NOR. The second step is the conversion of NOR to averantin and requires the norsolorinic acid ketoreductase aflD, which catalyzes the dehydration of norsolorinic acid to form (1'S)-averantin. The norsolorinic acid reductases aflE and aflF may also play a role in the conversion of NOR to AVN. The cytochrome P450 monooxygenase aflG then catalyzes the hydroxylation of AVN to 5'hydroxyaverantin (HAVN). The next step is performed by the 5'-hydroxyaverantin dehydrogenase aflH that transforms HAVN to 5'-oxoaverantin (OAVN) which is further converted to averufin (AVF) by aflK that plays a dual role in the pathway, as a 5'-oxoaverantin cyclase that mediates conversion of 5'-oxoaverantin, as well as a versicolorin B synthase in a later step in the pathway. The averufin oxidase aflI catalyzes the conversion of AVF to versiconal hemiacetal acetate (VHA). VHA is then the substrate for the versiconal hemiacetal acetate esterase aflJ to yield versiconal (VAL). Versicolorin B synthase aflK then converts VAL to versicolorin B (VERB) by closing the bisfuran ring of aflatoxin which is required for DNA-binding, thus giving to aflatoxin its activity as a mutagen. Then, the activity of the versicolorin B desaturase aflL leads to versicolorin A (VERA). A branch point starts from VERB since it can also be converted to dihydrodemethylsterigmatocystin (DMDHST), probably also by aflL, VERA being a precursor for aflatoxins B1 and G1, and DMDHST for aflatoxins B2 and G2. Next, the versicolorin reductase aflM and the cytochrome P450 monooxygenase aflN are involved in conversion of VERA to demethylsterigmatocystin (DMST). AflX and aflY seem also involved in this step, through probable aflX-mediated epoxide ring-opening step following versicolorin A oxidation and aflY-mediated Baeyer-Villiger oxidation required for the formation of the xanthone ring. The methyltransferase aflO then leads to the modification of DMST to sterigmatocystin (ST), and of DMDHST to dihydrosterigmatocystin (DHST). Both ST and DHST are then substrates of the O-methyltransferase aflP to yield O-methylsterigmatocystin (OMST) and dihydro-O-methylsterigmatocystin (DHOMST), respectively. Finally OMST is converted to aflatoxins B1 and G1, and DHOMST to aflatoxins B2 and G2, via the action of several enzymes including O-methylsterigmatocystin oxidoreductase aflQ, the cytochrome P450 monooxygenase aflU, but also the NADH-dependent flavin oxidoreductase nadA which is specifically required for the synthesis of AFG1. The chain is Norsolorinic acid reductase A from Aspergillus parasiticus (strain ATCC 56775 / NRRL 5862 / SRRC 143 / SU-1).